Reading from the N-terminus, the 439-residue chain is Ornithine aminotransferase, mitochondrial (439 aa).

The N-terminal 35 residues, 1-35 (MLSKLASLQTVAALRRGLRTSVASATSVATKKTEQ), are a transit peptide targeting the mitochondrion. N6-acetyllysine occurs at positions 49 and 66. Lys-102 carries the post-translational modification N6-succinyllysine. Residue Lys-107 is modified to N6-acetyllysine; alternate. N6-succinyllysine; alternate is present on Lys-107. An N6-(pyridoxal phosphate)lysine modification is found at Lys-292. N6-acetyllysine; alternate is present on Lys-362. Lys-362 is modified (N6-succinyllysine; alternate). Lys-386 and Lys-392 each carry N6-acetyllysine. Lys-405 is subject to N6-acetyllysine; alternate. Position 405 is an N6-succinyllysine; alternate (Lys-405). An N6-acetyllysine modification is found at Lys-421.

As to quaternary structure, homohexamer. Pyridoxal 5'-phosphate serves as cofactor. As to expression, expressed in the head and flagellum of epididymal sperm but not in testicular sperm (at protein level).

The protein resides in the mitochondrion matrix. The catalysed reaction is L-ornithine + 2-oxoglutarate = L-glutamate 5-semialdehyde + L-glutamate. The protein operates within amino-acid biosynthesis; L-proline biosynthesis; L-glutamate 5-semialdehyde from L-ornithine: step 1/1. Functionally, catalyzes the reversible interconversion of L-ornithine and 2-oxoglutarate to L-glutamate semialdehyde and L-glutamate. This is Ornithine aminotransferase, mitochondrial (Oat) from Rattus norvegicus (Rat).